The sequence spans 419 residues: 26S proteasome regulatory subunit 8 homolog B (419 aa).

202-209 serves as a coordination point for ATP; the sequence is GPPGTGKT. K406 participates in a covalent cross-link: Glycyl lysine isopeptide (Lys-Gly) (interchain with G-Cter in ubiquitin).

This sequence belongs to the AAA ATPase family. As to quaternary structure, component of the 19S regulatory particle (RP/PA700) base subcomplex of the 26S proteasome. The 26S proteasome is composed of a core protease (CP), known as the 20S proteasome, capped at one or both ends by the 19S regulatory particle (RP/PA700). The RP/PA700 complex is composed of at least 17 different subunits in two subcomplexes, the base and the lid, which form the portions proximal and distal to the 20S proteolytic core, respectively.

It is found in the cytoplasm. Its subcellular location is the nucleus. In terms of biological role, the 26S proteasome is involved in the ATP-dependent degradation of ubiquitinated proteins. The regulatory (or ATPase) complex confers ATP dependency and substrate specificity to the 26S complex. In Arabidopsis thaliana (Mouse-ear cress), this protein is 26S proteasome regulatory subunit 8 homolog B (RPT6B).